Reading from the N-terminus, the 601-residue chain is Elongation factor 4 (601 aa).

Residues 7 to 189 form the tr-type G domain; the sequence is RNIRNFSIIA…AIVHRIPPPK (183 aa). GTP contacts are provided by residues 19-24 and 136-139; these read DHGKST and NKID.

This sequence belongs to the TRAFAC class translation factor GTPase superfamily. Classic translation factor GTPase family. LepA subfamily.

The protein resides in the cell inner membrane. It carries out the reaction GTP + H2O = GDP + phosphate + H(+). Functionally, required for accurate and efficient protein synthesis under certain stress conditions. May act as a fidelity factor of the translation reaction, by catalyzing a one-codon backward translocation of tRNAs on improperly translocated ribosomes. Back-translocation proceeds from a post-translocation (POST) complex to a pre-translocation (PRE) complex, thus giving elongation factor G a second chance to translocate the tRNAs correctly. Binds to ribosomes in a GTP-dependent manner. This chain is Elongation factor 4, found in Xanthomonas campestris pv. campestris (strain 8004).